Reading from the N-terminus, the 431-residue chain is Serine/threonine-protein kinase Sgk1 (431 aa).

The tract at residues 1 to 60 (MTVKTEAARDTLTYSRMRGMVAILIAFMKQRRMGLNDFIQKIANNSYACKHPEVQSILKI) is necessary for localization to the mitochondria. The disordered stretch occupies residues 64-92 (QEPELMNANPSPPPSPSQQINLGPSSNPH). Phosphoserine is present on Ser74. Ser78 carries the post-translational modification Phosphoserine; by MAPK7. A compositionally biased stretch (polar residues) spans 81-91 (QQINLGPSSNP). Residues 98–355 (FHFLKVIGKG…FMEIKNHVFF (258 aa)) enclose the Protein kinase domain. ATP contacts are provided by residues 104 to 112 (IGKGSFGKV) and Lys127. The short motif at 131-141 (KKAILKKKEEK) is the Nuclear localization signal element. Residue Asp222 is the Proton acceptor of the active site. The residue at position 256 (Thr256) is a Phosphothreonine; by PDPK1. The region spanning 356 to 431 (SLINWEDLIN…SYAPPMDSFL (76 aa)) is the AGC-kinase C-terminal domain. A Phosphothreonine; by PKA modification is found at Thr369. Residues Ser397, Ser401, and Ser422 each carry the phosphoserine modification.

Belongs to the protein kinase superfamily. AGC Ser/Thr protein kinase family. As to quaternary structure, homodimer; disulfide-linked. Forms a trimeric complex with FBXW7 and NOTCH1. Interacts with MAPK3/ERK1, MAPK1/ERK2, MAP2K1/MEK1, MAP2K2/MEK2, NEDD4, NEDD4L, MAPT/TAU, MAPK7, CREB1, SLC9A3R2/NHERF2 and KCNJ1/ROMK1. Associates with the mammalian target of rapamycin complex 2 (mTORC2) via an interaction with MAPKAP1/SIN1. In terms of processing, regulated by phosphorylation. Activated by phosphorylation on Ser-422 by mTORC2, transforming it into a substrate for PDPK1 which phosphorylates it on Thr-256. Phosphorylation on Ser-397 and Ser-401 are also essential for its activity. Phosphorylation on Ser-78 by MAPK7 is required for growth factor-induced cell cycle progression. Post-translationally, ubiquitinated by NEDD4L; which promotes proteasomal degradation. Ubiquitinated by SYVN1 at the endoplasmic reticulum; which promotes rapid proteasomal degradation and maintains a high turnover rate in resting cells.

The protein resides in the cytoplasm. Its subcellular location is the nucleus. It is found in the endoplasmic reticulum membrane. It localises to the cell membrane. The protein localises to the mitochondrion. The enzyme catalyses L-seryl-[protein] + ATP = O-phospho-L-seryl-[protein] + ADP + H(+). It carries out the reaction L-threonyl-[protein] + ATP = O-phospho-L-threonyl-[protein] + ADP + H(+). Its activity is regulated as follows. Two specific sites, one in the kinase domain (Thr-256) and the other in the C-terminal regulatory region (Ser-422), need to be phosphorylated for its full activation. Phosphorylation at Ser-397 and Ser-401 are also essential for its activity. Activated by WNK1, WNK2, WNK3 and WNK4; which promote phosphorylation by mTORC2. Its function is as follows. Serine/threonine-protein kinase which is involved in the regulation of a wide variety of ion channels, membrane transporters, cellular enzymes, transcription factors, neuronal excitability, cell growth, proliferation, survival, migration and apoptosis. Plays an important role in cellular stress response. Contributes to regulation of renal Na(+) retention, renal K(+) elimination, salt appetite, gastric acid secretion, intestinal Na(+)/H(+) exchange and nutrient transport, insulin-dependent salt sensitivity of blood pressure, salt sensitivity of peripheral glucose uptake, cardiac repolarization and memory consolidation. Up-regulates Na(+) channels: SCNN1A/ENAC, SCN5A and ASIC1/ACCN2, K(+) channels: KCNJ1/ROMK1, KCNA1-5, KCNQ1-5 and KCNE1, epithelial Ca(2+) channels: TRPV5 and TRPV6, chloride channels: BSND, CLCN2 and CFTR, glutamate transporters: SLC1A3/EAAT1, SLC1A2 /EAAT2, SLC1A1/EAAT3, SLC1A6/EAAT4 and SLC1A7/EAAT5, amino acid transporters: SLC1A5/ASCT2, SLC38A1/SN1 and SLC6A19, creatine transporter: SLC6A8, Na(+)/dicarboxylate cotransporter: SLC13A2/NADC1, Na(+)-dependent phosphate cotransporter: SLC34A2/NAPI-2B, glutamate receptor: GRIK2/GLUR6. Up-regulates carriers: SLC9A3/NHE3, SLC12A1/NKCC2, SLC12A3/NCC, SLC5A3/SMIT, SLC2A1/GLUT1, SLC5A1/SGLT1 and SLC15A2/PEPT2. Regulates enzymes: GSK3A/B, PMM2 and Na(+)/K(+) ATPase, and transcription factors: CTNNB1 and nuclear factor NF-kappa-B. Stimulates sodium transport into epithelial cells by enhancing the stability and expression of SCNN1A/ENAC. This is achieved by phosphorylating the NEDD4L ubiquitin E3 ligase, promoting its interaction with 14-3-3 proteins, thereby preventing it from binding to SCNN1A/ENAC and targeting it for degradation. Regulates store-operated Ca(+2) entry (SOCE) by stimulating ORAI1 and STIM1. Regulates KCNJ1/ROMK1 directly via its phosphorylation or indirectly via increased interaction with SLC9A3R2/NHERF2. Phosphorylates MDM2 and activates MDM2-dependent ubiquitination of p53/TP53. Phosphorylates MAPT/TAU and mediates microtubule depolymerization and neurite formation in hippocampal neurons. Phosphorylates SLC2A4/GLUT4 and up-regulates its activity. Phosphorylates APBB1/FE65 and promotes its localization to the nucleus. Phosphorylates MAPK1/ERK2 and activates it by enhancing its interaction with MAP2K1/MEK1 and MAP2K2/MEK2. Phosphorylates FBXW7 and plays an inhibitory role in the NOTCH1 signaling. Phosphorylates FOXO1 resulting in its relocalization from the nucleus to the cytoplasm. Phosphorylates FOXO3, promoting its exit from the nucleus and interference with FOXO3-dependent transcription. Phosphorylates BRAF and MAP3K3/MEKK3 and inhibits their activity. Phosphorylates SLC9A3/NHE3 in response to dexamethasone, resulting in its activation and increased localization at the cell membrane. Phosphorylates CREB1. Necessary for vascular remodeling during angiogenesis. The polypeptide is Serine/threonine-protein kinase Sgk1 (SGK1) (Bos taurus (Bovine)).